Consider the following 402-residue polypeptide: Metacaspase-1 (402 aa).

The tract at residues 1-79 (MAYPGQGGHH…FAPPSGPIGP (79 aa)) is disordered. The segment covering 23–45 (PAPHGYAQPGYGYAPPSGPPQGY) has biased composition (low complexity). Residues His193 and Cys249 contribute to the active site.

The protein belongs to the peptidase C14B family.

In terms of biological role, involved in cell death (apoptosis). In Mycosarcoma maydis (Corn smut fungus), this protein is Metacaspase-1 (MCA1).